The sequence spans 455 residues: Mycosin-4 (455 aa).

The N-terminal stretch at 1–25 is a signal peptide; that stretch reads MTTSRTLRLLVVSALATLSGLGTPV. One can recognise a Peptidase S8 domain in the interval 74-384; sequence SAQLADLDQV…NGTVDALAAV (311 aa). Active-site charge relay system residues include aspartate 98, histidine 129, and serine 329. Positions 389–417 are disordered; that stretch reads IPQAGTATSDPAPVAVPVPRRSTPGPSDR. A compositionally biased stretch (low complexity) spans 394-412; sequence TATSDPAPVAVPVPRRSTP. The helical transmembrane segment at 432–452 threads the bilayer; sequence LALMATLATASRRLRPGRNGI.

This sequence belongs to the peptidase S8 family.

The protein resides in the cell membrane. The polypeptide is Mycosin-4 (Mycobacterium tuberculosis (strain ATCC 25618 / H37Rv)).